The chain runs to 561 residues: Delta(24)-sterol reductase (561 aa).

Residues Met1–Arg25 are Lumenal-facing. The residue at position 2 (Ser2) is a Phosphoserine. The helical; Signal-anchor transmembrane segment at Trp26–Leu46 threads the bilayer. At Gly47 to Asp561 the chain is on the cytoplasmic side. In terms of domain architecture, FAD-binding PCMH-type spans Met49–Val232. The tract at residues Cys518 to Arg539 is interaction with calmodulin.

The protein belongs to the DIMINUTO family. In terms of assembly, interacts with calmodulin.

Its subcellular location is the microsome membrane. The enzyme catalyses lathosterol + NADP(+) = 5alpha-cholesta-7,24-dien-3beta-ol + NADPH + H(+). Its function is as follows. Plays a critical role in the general process of plant cell elongation. Involved in the synthesis of campesterol, an early precursor of brassinolide. Required for the conversion of 24-methylenecholesterol to campesterol and for the conversion of isofucosterol to sitosterol. Necessary for both the isomerization and reduction of 24-methylenecholesterol. Regulates indirectly phytochrome-mediated light responses through the modulation of brassinosteroid biosynthesis. This Arabidopsis thaliana (Mouse-ear cress) protein is Delta(24)-sterol reductase (DIM).